Here is a 338-residue protein sequence, read N- to C-terminus: UPF0324 membrane protein HI_1643 (338 aa).

10 helical membrane-spanning segments follow: residues 5-23 (PFYF…ANYL), 33-55 (HISA…YPQF), 62-84 (GVLF…RLTF), 94-116 (AVVT…GIRY), 123-145 (LVYL…AEPV), 155-177 (VAIA…FYTW), 222-239 (LRVM…WLLT), 254-273 (IPWF…FDLL), 280-302 (LFVE…TTQA), and 312-334 (PLVL…NYGI).

It belongs to the UPF0324 family.

It localises to the cell membrane. In Haemophilus influenzae (strain ATCC 51907 / DSM 11121 / KW20 / Rd), this protein is UPF0324 membrane protein HI_1643.